A 143-amino-acid chain; its full sequence is Deoxyuridine 5'-triphosphate nucleotidohydrolase (143 aa).

Residues 63–65 (RSG), asparagine 76, 80–82 (TID), and lysine 90 each bind substrate.

This sequence belongs to the dUTPase family. Mg(2+) is required as a cofactor.

The catalysed reaction is dUTP + H2O = dUMP + diphosphate + H(+). It functions in the pathway pyrimidine metabolism; dUMP biosynthesis; dUMP from dCTP (dUTP route): step 2/2. In terms of biological role, this enzyme is involved in nucleotide metabolism: it produces dUMP, the immediate precursor of thymidine nucleotides and it decreases the intracellular concentration of dUTP so that uracil cannot be incorporated into DNA. The chain is Deoxyuridine 5'-triphosphate nucleotidohydrolase from Finegoldia magna (strain ATCC 29328 / DSM 20472 / WAL 2508) (Peptostreptococcus magnus).